The following is a 56-amino-acid chain: Small ribosomal subunit protein uS14 (56 aa).

Positions 21, 24, 39, and 42 each coordinate Zn(2+).

It belongs to the universal ribosomal protein uS14 family. As to quaternary structure, component of the 40S small ribosomal subunit. The cofactor is Zn(2+).

It localises to the cytoplasm. The protein resides in the cytosol. It is found in the rough endoplasmic reticulum. The polypeptide is Small ribosomal subunit protein uS14 (RpS29) (Culex quinquefasciatus (Southern house mosquito)).